A 495-amino-acid polypeptide reads, in one-letter code: Dipeptide and tripeptide permease B (495 aa).

Residues 1-16 lie on the Cytoplasmic side of the membrane; it reads MDNKVSILNQPKPFKM. Residues 17 to 37 form a helical membrane-spanning segment; that stretch reads IFFIELWERFGYYGLQGILAV. At 38-50 the chain is on the periplasmic side; it reads YFVDKLGFSMQDS. Residues 51–71 traverse the membrane as a helical segment; that stretch reads FVTFGAFAALVYGLVSVGGYV. Residues 72–80 lie on the Cytoplasmic side of the membrane; sequence GDYVLGTKR. The helical transmembrane segment at 81–101 threads the bilayer; sequence TMVFGAVVLALGYFLMGFSIL. The Periplasmic segment spans residues 102–104; it reads NPN. A helical membrane pass occupies residues 105-125; that stretch reads FIYVALGAIAVGNGLFKANPS. At 126-144 the chain is on the cytoplasmic side; sequence SLLAKCYEKGDSRLDGAFT. The chain crosses the membrane as a helical span at residues 145-165; sequence LYYMSINIGSLVSLSISPVIA. At 166 to 170 the chain is on the periplasmic side; that stretch reads NNYGY. The helical transmembrane segment at 171-191 threads the bilayer; it reads EYAFIICGLGLIASLFSYFSL. The Cytoplasmic portion of the chain corresponds to 192-209; it reads RSTVQGIGSEPDALPLNK. A helical membrane pass occupies residues 210-230; sequence TKALIVLIGTIASTLVCAWLL. Residue Gln-231 is a topological domain, periplasmic. Residues 232–252 form a helical membrane-spanning segment; sequence NIMMANLALGLIGVGVVGFFL. The Cytoplasmic portion of the chain corresponds to 253-265; the sequence is KETFKEVGEQRNK. The chain crosses the membrane as a helical span at residues 266–286; the sequence is MIVAFILMLQAIIFYVLYAQM. Over 287–309 the chain is Periplasmic; it reads PTSLNFFAINNVHSELFGMDINP. The chain crosses the membrane as a helical span at residues 310-330; it reads VSLQALNPFWVIFCSPILAYL. At 331 to 348 the chain is on the cytoplasmic side; sequence YTYYGNQNKDLSMPGKFT. Residues 349 to 369 form a helical membrane-spanning segment; that stretch reads VGMFMCAFGFLSVAAAGNWFA. Residues 370-373 are Periplasmic-facing; it reads DQAG. A helical transmembrane segment spans residues 374-394; the sequence is MVSVWWMVLVYLFQSLGELMI. The Cytoplasmic segment spans residues 395–409; the sequence is SGLGLAMVASLVPQR. A helical transmembrane segment spans residues 410 to 430; it reads LMGFTMGAWFLTQAASFIIGG. At 431-454 the chain is on the periplasmic side; the sequence is YVATFSATPEHLTDPLDTLPVYTE. Residues 455 to 475 form a helical membrane-spanning segment; the sequence is LFQNIGFVTLAVAIVMAITAP. Topologically, residues 476 to 495 are cytoplasmic; that stretch reads KLNKMMTSSQPEDAELVEQP.

The protein belongs to the major facilitator superfamily. Proton-dependent oligopeptide transporter (POT/PTR) (TC 2.A.17) family. DtpB subfamily.

It is found in the cell inner membrane. Its function is as follows. Proton-dependent permease that transports di- and tripeptides. The sequence is that of Dipeptide and tripeptide permease B from Aliivibrio fischeri (strain MJ11) (Vibrio fischeri).